Reading from the N-terminus, the 493-residue chain is MAKIMIQGTASSVGKSLIVAALCRIFKQDGYSVCPFKSQNMSLNSYITLDGKEMGRAQVLQAYATGLEPEVYMNPILLKPTSDRKCQIIVNGKVYGNSTAMGYHNLKLKFKDMLKEHFNKLEEEFDIVVMEGAGSPAEINLRDRDIVNMGMAELVDAPVLLVGDIDKGGVFASLAGTMLLLKDGEKERVKGTIINKFRGDVEILKPGLDMLEDIVHIPCLGVVPYTRLQLEDEDGAVEFNKKAYAPIDIAVIKMPHISNFTDLDALKSEEDVSIRFITSKEEFKEPDLLIIPGSKNTIEDLLYLRQCGLEESIKEYSKDGKIIGICGGYQVLGSKIKDPHNVETDLGEIDGLNLLDMKTIFEKEKITTRVSAKLLNEEIENTVYGYEIHMGISEYSENVKPLFKIYNKNGEKVGYFDGAINEKGNVMGTYIHGVFDGVVFREKIINELRVKKGLKKKKSQIYEHMREKELDKLADIVRQSLDMEKIYSIIGMK.

The region spanning 246–440 is the GATase cobBQ-type domain; that stretch reads PIDIAVIKMP…IHGVFDGVVF (195 aa). The active-site Nucleophile is the Cys326. The active site involves His432.

The protein belongs to the CobB/CobQ family. CobQ subfamily.

Its pathway is cofactor biosynthesis; adenosylcobalamin biosynthesis. Catalyzes amidations at positions B, D, E, and G on adenosylcobyrinic A,C-diamide. NH(2) groups are provided by glutamine, and one molecule of ATP is hydrogenolyzed for each amidation. The protein is Cobyric acid synthase of Clostridium botulinum (strain Okra / Type B1).